Consider the following 215-residue polypeptide: Pyridoxine/pyridoxamine 5'-phosphate oxidase (215 aa).

Substrate contacts are provided by residues 9–12 (RRDY) and Lys-69. FMN-binding positions include 64–69 (RVLLLK), 79–80 (FT), Lys-86, and Gln-108. Tyr-126, Arg-130, and Ser-134 together coordinate substrate. Residues 143 to 144 (QS) and Trp-188 each bind FMN. 194-196 (RLH) lines the substrate pocket. FMN is bound at residue Arg-198.

It belongs to the pyridoxamine 5'-phosphate oxidase family. In terms of assembly, homodimer. Requires FMN as cofactor.

It carries out the reaction pyridoxamine 5'-phosphate + O2 + H2O = pyridoxal 5'-phosphate + H2O2 + NH4(+). The enzyme catalyses pyridoxine 5'-phosphate + O2 = pyridoxal 5'-phosphate + H2O2. Its pathway is cofactor metabolism; pyridoxal 5'-phosphate salvage; pyridoxal 5'-phosphate from pyridoxamine 5'-phosphate: step 1/1. It functions in the pathway cofactor metabolism; pyridoxal 5'-phosphate salvage; pyridoxal 5'-phosphate from pyridoxine 5'-phosphate: step 1/1. Catalyzes the oxidation of either pyridoxine 5'-phosphate (PNP) or pyridoxamine 5'-phosphate (PMP) into pyridoxal 5'-phosphate (PLP). This is Pyridoxine/pyridoxamine 5'-phosphate oxidase from Pseudomonas putida (strain W619).